We begin with the raw amino-acid sequence, 357 residues long: Glycerol-3-phosphate dehydrogenase [NAD(P)+] (357 aa).

Residues S12, W13, H33, and K115 each coordinate NADPH. Positions 115, 149, and 151 each coordinate sn-glycerol 3-phosphate. Residue G153 coordinates NADPH. K204, D263, R274, and N275 together coordinate sn-glycerol 3-phosphate. The active-site Proton acceptor is K204. R274 is a binding site for NADPH. 2 residues coordinate NADPH: L307 and E309.

The protein belongs to the NAD-dependent glycerol-3-phosphate dehydrogenase family.

The protein localises to the cytoplasm. The catalysed reaction is sn-glycerol 3-phosphate + NAD(+) = dihydroxyacetone phosphate + NADH + H(+). The enzyme catalyses sn-glycerol 3-phosphate + NADP(+) = dihydroxyacetone phosphate + NADPH + H(+). Its pathway is membrane lipid metabolism; glycerophospholipid metabolism. In terms of biological role, catalyzes the reduction of the glycolytic intermediate dihydroxyacetone phosphate (DHAP) to sn-glycerol 3-phosphate (G3P), the key precursor for phospholipid synthesis. The sequence is that of Glycerol-3-phosphate dehydrogenase [NAD(P)+] from Treponema denticola (strain ATCC 35405 / DSM 14222 / CIP 103919 / JCM 8153 / KCTC 15104).